The chain runs to 131 residues: MSMQDTVADMLTRVRNAQMAKKQTVSMPSSKLKVAIANVLQQEGYISNVEVAQEETKSTLTITLKYFEGKPVIEMVKRVSRPGLRQYRGKDKLPSVKQGLGIAIVSTSKGIMTDRAARAAGIGGEVIAFVS.

This sequence belongs to the universal ribosomal protein uS8 family. As to quaternary structure, part of the 30S ribosomal subunit. Contacts proteins S5 and S12.

In terms of biological role, one of the primary rRNA binding proteins, it binds directly to 16S rRNA central domain where it helps coordinate assembly of the platform of the 30S subunit. In Acinetobacter baumannii (strain AB307-0294), this protein is Small ribosomal subunit protein uS8.